The following is a 462-amino-acid chain: Bifunctional protein GlmU (462 aa).

The pyrophosphorylase stretch occupies residues 1–230; that stretch reads MVNKNAIILA…FEESMGVNDR (230 aa). Residues 9–12, lysine 23, glutamine 73, 78–79, 101–103, glycine 140, glutamate 155, asparagine 170, and asparagine 228 each bind UDP-N-acetyl-alpha-D-glucosamine; these read LAAG, GT, and SGD. Aspartate 103 lines the Mg(2+) pocket. Asparagine 228 provides a ligand contact to Mg(2+). Positions 231 to 251 are linker; the sequence is VALSQATKVMRQRINTAHMRN. Residues 252–462 form an N-acetyltransferase region; the sequence is GVTLIDPEST…LPVAKDEEWQ (211 aa). The UDP-N-acetyl-alpha-D-glucosamine site is built by arginine 333 and lysine 351. Histidine 363 serves as the catalytic Proton acceptor. Positions 366 and 377 each coordinate UDP-N-acetyl-alpha-D-glucosamine. Residues 386–387, serine 405, alanine 423, and arginine 440 contribute to the acetyl-CoA site; that span reads NY.

It in the N-terminal section; belongs to the N-acetylglucosamine-1-phosphate uridyltransferase family. The protein in the C-terminal section; belongs to the transferase hexapeptide repeat family. Homotrimer. It depends on Mg(2+) as a cofactor.

It is found in the cytoplasm. The enzyme catalyses alpha-D-glucosamine 1-phosphate + acetyl-CoA = N-acetyl-alpha-D-glucosamine 1-phosphate + CoA + H(+). It carries out the reaction N-acetyl-alpha-D-glucosamine 1-phosphate + UTP + H(+) = UDP-N-acetyl-alpha-D-glucosamine + diphosphate. It functions in the pathway nucleotide-sugar biosynthesis; UDP-N-acetyl-alpha-D-glucosamine biosynthesis; N-acetyl-alpha-D-glucosamine 1-phosphate from alpha-D-glucosamine 6-phosphate (route II): step 2/2. It participates in nucleotide-sugar biosynthesis; UDP-N-acetyl-alpha-D-glucosamine biosynthesis; UDP-N-acetyl-alpha-D-glucosamine from N-acetyl-alpha-D-glucosamine 1-phosphate: step 1/1. The protein operates within bacterial outer membrane biogenesis; LPS lipid A biosynthesis. Its function is as follows. Catalyzes the last two sequential reactions in the de novo biosynthetic pathway for UDP-N-acetylglucosamine (UDP-GlcNAc). The C-terminal domain catalyzes the transfer of acetyl group from acetyl coenzyme A to glucosamine-1-phosphate (GlcN-1-P) to produce N-acetylglucosamine-1-phosphate (GlcNAc-1-P), which is converted into UDP-GlcNAc by the transfer of uridine 5-monophosphate (from uridine 5-triphosphate), a reaction catalyzed by the N-terminal domain. The polypeptide is Bifunctional protein GlmU (Latilactobacillus sakei subsp. sakei (strain 23K) (Lactobacillus sakei subsp. sakei)).